The chain runs to 211 residues: Eukaryotic translation initiation factor 4E (211 aa).

It belongs to the eukaryotic initiation factor 4E family. As to quaternary structure, eIF4F is a multi-subunit complex, the composition of which varies with external and internal environmental conditions. It is composed of at least eIF4A, eIF4E and eIF4G. eIF4E is also known to interact with other partners.

Recognizes and binds the 7-methylguanosine-containing mRNA cap during an early step in the initiation of protein synthesis and facilitates ribosome binding by inducing the unwinding of the mRNAs secondary structures. The protein is Eukaryotic translation initiation factor 4E (TIF45) of Eremothecium gossypii (strain ATCC 10895 / CBS 109.51 / FGSC 9923 / NRRL Y-1056) (Yeast).